The sequence spans 880 residues: Leucine--tRNA ligase (880 aa).

Positions 46 to 56 (PYPSGALHMGH) match the 'HIGH' region motif. The short motif at 638-642 (KMSKS) is the 'KMSKS' region element. Lysine 641 is a binding site for ATP.

It belongs to the class-I aminoacyl-tRNA synthetase family.

The protein localises to the cytoplasm. The enzyme catalyses tRNA(Leu) + L-leucine + ATP = L-leucyl-tRNA(Leu) + AMP + diphosphate. This is Leucine--tRNA ligase from Xanthomonas oryzae pv. oryzae (strain KACC10331 / KXO85).